The primary structure comprises 424 residues: Isovaleryl-CoA dehydrogenase, mitochondrial (424 aa).

The N-terminal 30 residues, methionine 1–alanine 30, are a transit peptide targeting the mitochondrion. N6-acetyllysine; alternate is present on residues lysine 56, lysine 65, and lysine 76. 3 positions are modified to N6-succinyllysine; alternate: lysine 56, lysine 65, and lysine 76. FAD is bound by residues leucine 163–serine 172 and tryptophan 196–threonine 198. Serine 172 contributes to the substrate binding site. Substrate is bound at residue serine 220 to arginine 221. Lysine 239 carries the post-translational modification N6-acetyllysine. Lysine 260 bears the N6-acetyllysine; alternate mark. Lysine 260 carries the N6-succinyllysine; alternate modification. Substrate-binding positions include tyrosine 275 and aspartate 282–arginine 285. Glutamate 284 functions as the Proton acceptor in the catalytic mechanism. FAD is bound at residue arginine 310. An N6-succinyllysine modification is found at lysine 316. FAD is bound by residues glutamine 321 and glutamine 378 to glycine 382. Glycine 405–glycine 406 contacts substrate. Position 407-409 (threonine 407–glutamate 409) interacts with FAD.

The protein belongs to the acyl-CoA dehydrogenase family. Homotetramer. It depends on FAD as a cofactor.

It is found in the mitochondrion matrix. The catalysed reaction is 3-methylbutanoyl-CoA + oxidized [electron-transfer flavoprotein] + H(+) = 3-methylbut-2-enoyl-CoA + reduced [electron-transfer flavoprotein]. The enzyme catalyses pentanoyl-CoA + oxidized [electron-transfer flavoprotein] + H(+) = (2E)-pentenoyl-CoA + reduced [electron-transfer flavoprotein]. It catalyses the reaction hexanoyl-CoA + oxidized [electron-transfer flavoprotein] + H(+) = (2E)-hexenoyl-CoA + reduced [electron-transfer flavoprotein]. It carries out the reaction butanoyl-CoA + oxidized [electron-transfer flavoprotein] + H(+) = (2E)-butenoyl-CoA + reduced [electron-transfer flavoprotein]. Its pathway is amino-acid degradation; L-leucine degradation; (S)-3-hydroxy-3-methylglutaryl-CoA from 3-isovaleryl-CoA: step 1/3. Its function is as follows. Catalyzes the conversion of isovaleryl-CoA/3-methylbutanoyl-CoA to 3-methylbut-2-enoyl-CoA as an intermediate step in the leucine (Leu) catabolic pathway. To a lesser extent, is also able to catalyze the oxidation of other saturated short-chain acyl-CoA thioesters as pentanoyl-CoA, hexenoyl-CoA and butenoyl-CoA. The polypeptide is Isovaleryl-CoA dehydrogenase, mitochondrial (Ivd) (Rattus norvegicus (Rat)).